The following is a 113-amino-acid chain: U11-theraphotoxin-Hhn1g (113 aa).

The signal sequence occupies residues 1-21; sequence MNTVRVTFLLVFVLAVSLGQA. A propeptide spanning residues 22–74 is cleaved from the precursor; the sequence is DKDENRMEMQEKTEQGKSYLDFAENLLLQKLEELEAKLLEEDSEESRNSRQKR. The tract at residues 61 to 83 is disordered; the sequence is EEDSEESRNSRQKRCIGEGVPCD. 3 disulfide bridges follow: cysteine 75/cysteine 90, cysteine 82/cysteine 95, and cysteine 89/cysteine 110.

Belongs to the neurotoxin 14 (magi-1) family. 01 (HNTX-16) subfamily. Expressed by the venom gland.

It is found in the secreted. Its function is as follows. Probable ion channel inhibitor. This chain is U11-theraphotoxin-Hhn1g, found in Cyriopagopus hainanus (Chinese bird spider).